Reading from the N-terminus, the 337-residue chain is Putative 4-hydroxythreonine-4-phosphate dehydrogenase 2 (337 aa).

The a divalent metal cation site is built by H173, H217, and H274.

The protein belongs to the PdxA family. Homodimer. Zn(2+) serves as cofactor. Requires Mg(2+) as cofactor. Co(2+) is required as a cofactor.

It localises to the cytoplasm. The enzyme catalyses 4-(phosphooxy)-L-threonine + NAD(+) = 3-amino-2-oxopropyl phosphate + CO2 + NADH. It participates in cofactor biosynthesis; pyridoxine 5'-phosphate biosynthesis; pyridoxine 5'-phosphate from D-erythrose 4-phosphate: step 4/5. Functionally, catalyzes the NAD(P)-dependent oxidation of 4-(phosphooxy)-L-threonine (HTP) into 2-amino-3-oxo-4-(phosphooxy)butyric acid which spontaneously decarboxylates to form 3-amino-2-oxopropyl phosphate (AHAP). The protein is Putative 4-hydroxythreonine-4-phosphate dehydrogenase 2 of Pseudomonas aeruginosa (strain ATCC 15692 / DSM 22644 / CIP 104116 / JCM 14847 / LMG 12228 / 1C / PRS 101 / PAO1).